Reading from the N-terminus, the 358-residue chain is Phospho-N-acetylmuramoyl-pentapeptide-transferase (358 aa).

Transmembrane regions (helical) follow at residues 27–47 (IYAMITALLVCFVLGPWVIRV), 73–93 (TMGGVMILAAIVIPTLLWADL), 97–117 (YIWTVLFITIGYGLIGFVDDY), 134–154 (MFWQVLLAGAVGTFLFLKPGF), 170–190 (LWFWYIPFVTLVIVGASNAVN), 197–217 (GLAIGPVAINAATYMLFSYVA), 233–253 (GAGELAVLCGAMVGAGLGFLW), 261–281 (VFMGDVGSLSLGGTLGAIAVI), 286–306 (ILLVIVGGIFVIEALSVIFQV), and 335–355 (KIIVRFWIITIILALVAISTL).

It belongs to the glycosyltransferase 4 family. MraY subfamily. Mg(2+) serves as cofactor.

Its subcellular location is the cell inner membrane. The catalysed reaction is UDP-N-acetyl-alpha-D-muramoyl-L-alanyl-gamma-D-glutamyl-meso-2,6-diaminopimeloyl-D-alanyl-D-alanine + di-trans,octa-cis-undecaprenyl phosphate = di-trans,octa-cis-undecaprenyl diphospho-N-acetyl-alpha-D-muramoyl-L-alanyl-D-glutamyl-meso-2,6-diaminopimeloyl-D-alanyl-D-alanine + UMP. Its pathway is cell wall biogenesis; peptidoglycan biosynthesis. In terms of biological role, catalyzes the initial step of the lipid cycle reactions in the biosynthesis of the cell wall peptidoglycan: transfers peptidoglycan precursor phospho-MurNAc-pentapeptide from UDP-MurNAc-pentapeptide onto the lipid carrier undecaprenyl phosphate, yielding undecaprenyl-pyrophosphoryl-MurNAc-pentapeptide, known as lipid I. This is Phospho-N-acetylmuramoyl-pentapeptide-transferase from Pelobacter propionicus (strain DSM 2379 / NBRC 103807 / OttBd1).